Reading from the N-terminus, the 255-residue chain is Aliphatic sulfonates import ATP-binding protein SsuB (255 aa).

An ABC transporter domain is found at 12–233 (LLLNAVSKHY…RLGSVRLAEL (222 aa)). Position 44 to 51 (44 to 51 (GRSGGGKS)) interacts with ATP.

It belongs to the ABC transporter superfamily. Aliphatic sulfonates importer (TC 3.A.1.17.2) family. As to quaternary structure, the complex is composed of two ATP-binding proteins (SsuB), two transmembrane proteins (SsuC) and a solute-binding protein (SsuA).

It localises to the cell inner membrane. The catalysed reaction is ATP + H2O + aliphatic sulfonate-[sulfonate-binding protein]Side 1 = ADP + phosphate + aliphatic sulfonateSide 2 + [sulfonate-binding protein]Side 1.. In terms of biological role, part of the ABC transporter complex SsuABC involved in aliphatic sulfonates import. Responsible for energy coupling to the transport system. In Escherichia coli O1:K1 / APEC, this protein is Aliphatic sulfonates import ATP-binding protein SsuB.